The chain runs to 580 residues: Netrin-3 (580 aa).

Positions 1 to 27 are cleaved as a signal peptide; sequence MPGWPWGLLLTAGTLFAALSPGPPAPA. Positions 36 to 254 constitute a Laminin N-terminal domain; the sequence is APRGCVPGLV…AATDLQVGGR (219 aa). Residues 62–83 form a disordered region; the sequence is PATRACDASDPRRAHSPALLTS. 15 cysteine pairs are disulfide-bonded: Cys-92/Cys-125, Cys-255/Cys-264, Cys-257/Cys-274, Cys-276/Cys-285, Cys-288/Cys-308, Cys-311/Cys-320, Cys-313/Cys-338, Cys-341/Cys-350, Cys-353/Cys-371, Cys-374/Cys-386, Cys-376/Cys-393, Cys-395/Cys-404, Cys-407/Cys-421, Cys-441/Cys-514, and Cys-460/Cys-577. Residue Asn-104 is glycosylated (N-linked (GlcNAc...) asparagine). 3 consecutive Laminin EGF-like domains span residues 255-308, 311-371, and 374-421; these read CKCN…SHAC, CSCN…RRAC, and CDCH…VAPC. Asn-387 carries N-linked (GlcNAc...) asparagine glycosylation. The 137-residue stretch at 441-577 folds into the NTR domain; sequence CDSHCKPARG…LQRRERRGRC (137 aa). Residues 500–502 carry the Cell attachment site; atypical motif; sequence RGS.

In terms of tissue distribution, spinal cord.

It is found in the secreted. The protein resides in the extracellular space. Its subcellular location is the extracellular matrix. Functionally, netrins control guidance of CNS commissural axons and peripheral motor axons. The chain is Netrin-3 (NTN3) from Homo sapiens (Human).